The following is a 105-amino-acid chain: uncharacterized protein (105 aa).

This is an uncharacterized protein from Orgyia pseudotsugata multicapsid polyhedrosis virus (OpMNPV).